A 597-amino-acid polypeptide reads, in one-letter code: Probable translation initiation factor IF-2 (597 aa).

A tr-type G domain is found at 13 to 229 (LRTPIVCVMG…LLGLAQKFLE (217 aa)). Residues 22–29 (GHVDHGKT) are G1. GTP is bound at residue 22–29 (GHVDHGKT). A G2 region spans residues 47–51 (AITQH). The segment at 84 to 87 (DTPG) is G3. GTP is bound by residues 84 to 88 (DTPGH) and 138 to 141 (NKID). The segment at 138–141 (NKID) is G4. The G5 stretch occupies residues 206–208 (SAV).

Belongs to the TRAFAC class translation factor GTPase superfamily. Classic translation factor GTPase family. IF-2 subfamily.

Functionally, function in general translation initiation by promoting the binding of the formylmethionine-tRNA to ribosomes. Seems to function along with eIF-2. The protein is Probable translation initiation factor IF-2 of Methanosarcina acetivorans (strain ATCC 35395 / DSM 2834 / JCM 12185 / C2A).